We begin with the raw amino-acid sequence, 302 residues long: uncharacterized protein (302 aa).

Residues 19-90 (QWLFSVLKTA…GELDILFEDN (72 aa)) enclose the S4 RNA-binding domain. The active site involves Asp-138. Positions 182–205 (KGTINSPIGRDRSHPTRRRVSPGG) are disordered.

This sequence belongs to the pseudouridine synthase RluA family.

It catalyses the reaction a uridine in RNA = a pseudouridine in RNA. This is an uncharacterized protein from Bacillus subtilis (strain 168).